The sequence spans 150 residues: Sulfur-rich protein, serovars L1/L3 (150 aa).

The interval 1–20 (MSTVPVVQGAGSSNSAQDIS) is disordered. Helical transmembrane passes span 43–63 (VGLV…VSAA) and 69–89 (IYLA…ILSM).

The protein resides in the membrane. The polypeptide is Sulfur-rich protein, serovars L1/L3 (srp) (Chlamydia trachomatis).